The following is a 265-amino-acid chain: Capsule polysaccharide export inner-membrane protein BexB (265 aa).

6 helical membrane passes run 37 to 57, 64 to 84, 118 to 138, 151 to 171, 178 to 198, and 235 to 255; these read IGFFWLFVEPLLMTFFIVMMW, KFSTLNMIAFVMTGYPMAMMW, LLEVAGASIAQILFMAILVMI, LIAWFLMAMFAFGLGLIICAI, FGKIWGTLSFVLLPISGAFFF, and ESIGFLVVSDLALLLLGLVMV. The ABC transmembrane type-2 domain maps to 37-258; the sequence is IGFFWLFVEP…LLGLVMVKNF (222 aa).

Belongs to the ABC-2 integral membrane protein family.

It is found in the cell inner membrane. In terms of biological role, may form an ATP-driven capsule polysaccharide export apparatus, in association with the BexA, BexC and BexD proteins. The protein is Capsule polysaccharide export inner-membrane protein BexB (bexB) of Haemophilus influenzae.